We begin with the raw amino-acid sequence, 311 residues long: Pyrimidine-specific ribonucleoside hydrolase RihA (311 aa).

Residue His-240 is part of the active site.

The protein belongs to the IUNH family. RihA subfamily.

Hydrolyzes cytidine or uridine to ribose and cytosine or uracil, respectively. This chain is Pyrimidine-specific ribonucleoside hydrolase RihA, found in Salmonella paratyphi B (strain ATCC BAA-1250 / SPB7).